The primary structure comprises 34 residues: Photosystem II reaction center protein T (34 aa).

Residues 3–23 (ALVYTFLLVSTLGIIFFAIFF) form a helical membrane-spanning segment.

It belongs to the PsbT family. PSII is composed of 1 copy each of membrane proteins PsbA, PsbB, PsbC, PsbD, PsbE, PsbF, PsbH, PsbI, PsbJ, PsbK, PsbL, PsbM, PsbT, PsbY, PsbZ, Psb30/Ycf12, at least 3 peripheral proteins of the oxygen-evolving complex and a large number of cofactors. It forms dimeric complexes.

The protein localises to the plastid. It is found in the chloroplast thylakoid membrane. Found at the monomer-monomer interface of the photosystem II (PS II) dimer, plays a role in assembly and dimerization of PSII. PSII is a light-driven water plastoquinone oxidoreductase, using light energy to abstract electrons from H(2)O, generating a proton gradient subsequently used for ATP formation. The chain is Photosystem II reaction center protein T from Atropa belladonna (Belladonna).